The chain runs to 468 residues: uncharacterized protein (468 aa).

Residues 447-468 form a disordered region; the sequence is AVHVSNGDKPKVALPDTQLGSH.

The protein belongs to the mycobacterial PPE family.

This is an uncharacterized protein from Mycobacterium tuberculosis (strain CDC 1551 / Oshkosh).